Here is a 248-residue protein sequence, read N- to C-terminus: Protein PIMREG (248 aa).

Positions 1 to 10 (MASRWQNMGT) are enriched in polar residues. The tract at residues 1-32 (MASRWQNMGTSVRRRSLQHQEQLEDSKELQPV) is disordered. Residues serine 11 and serine 16 each carry the phosphoserine modification. 2 short sequence motifs (D-box) span residues 14 to 17 (RRSL) and 53 to 56 (RLPL). The tract at residues 117 to 205 (KARRRKRGAQ…PSESDSDLEP (89 aa)) is disordered. Position 129 is a phosphoserine (serine 129). Residue serine 131 is modified to Phosphoserine; by UHMK1; in vitro. Polar residues-rich tracts occupy residues 132–143 (PTHSLSQKSTRL) and 186–198 (PYSSTEPLCSPSE). A phosphoserine mark is found at serine 199 and serine 201.

Isoform 1 and isoform 2 interact with PICALM; this interaction may target PICALM to the nucleus. During mitosis, associates with HDAC2 and MTA2 subunits of the chromatin-remodeling NuRD complex; this association is strongest at prometaphase and decreases as the cell progresses through metaphase and anaphase. In terms of processing, ubiquitinated by the anaphase-promoting complex/cyclosome (APC/C) complex in the presence of FZR1, leading to its degradation by the proteasome during mitotic exit. However, degradation is not essential for normal mitotic progression within a single cell cycle. Expressed in thymus (at protein level). Detected in spleen, colon, ovary and small intestines.

It is found in the nucleus. Its subcellular location is the nucleolus. Functionally, during mitosis, may play a role in the control of metaphase-to-anaphase transition. This chain is Protein PIMREG, found in Homo sapiens (Human).